The primary structure comprises 1295 residues: Phosphoribosylformylglycinamidine synthase (1295 aa).

Residues 305–327 form a disordered region; that stretch reads WPGAATGSGGEIRDEGATGRGAK. Residues 307–318, 386–388, and Ala-678 each bind ATP; these read GAATGSGGEIRD and TGY. Residues Asp-679, Glu-718, Asn-722, and Asp-884 each coordinate Mg(2+). Residue Ser-886 participates in ATP binding. The region spanning 1042–1295 is the Glutamine amidotransferase type-1 domain; it reads VAVLREQGVN…IFRNARKQLG (254 aa). The active-site Nucleophile is the Cys-1135. Active-site residues include His-1260 and Glu-1262.

In the N-terminal section; belongs to the FGAMS family. As to quaternary structure, monomer.

The protein resides in the cytoplasm. It catalyses the reaction N(2)-formyl-N(1)-(5-phospho-beta-D-ribosyl)glycinamide + L-glutamine + ATP + H2O = 2-formamido-N(1)-(5-O-phospho-beta-D-ribosyl)acetamidine + L-glutamate + ADP + phosphate + H(+). It functions in the pathway purine metabolism; IMP biosynthesis via de novo pathway; 5-amino-1-(5-phospho-D-ribosyl)imidazole from N(2)-formyl-N(1)-(5-phospho-D-ribosyl)glycinamide: step 1/2. In terms of biological role, phosphoribosylformylglycinamidine synthase involved in the purines biosynthetic pathway. Catalyzes the ATP-dependent conversion of formylglycinamide ribonucleotide (FGAR) and glutamine to yield formylglycinamidine ribonucleotide (FGAM) and glutamate. This Salmonella typhimurium (strain LT2 / SGSC1412 / ATCC 700720) protein is Phosphoribosylformylglycinamidine synthase.